The chain runs to 681 residues: Epithelial splicing regulatory protein 1 (681 aa).

3 RRM domains span residues 225–302 (TVVR…KATG), 326–406 (VIVR…RSTA), and 445–525 (DCIR…QCSA). At Ser543 the chain carries Phosphoserine. At Arg582 the chain carries Omega-N-methylarginine.

The protein belongs to the ESRP family. As to expression, epithelial cell-specific.

It localises to the nucleus. Its function is as follows. mRNA splicing factor that regulates the formation of epithelial cell-specific isoforms. Specifically regulates the expression of FGFR2-IIIb, an epithelial cell-specific isoform of FGFR2. Also regulates the splicing of CD44, CTNND1, ENAH, 3 transcripts that undergo changes in splicing during the epithelial-to-mesenchymal transition (EMT). Acts by directly binding specific sequences in mRNAs. Binds the GU-rich sequence motifs in the ISE/ISS-3, a cis-element regulatory region present in the mRNA of FGFR2. Regulates splicing and expression of genes involved in inner ear development, auditory hair cell differentiation, and cell fate specification in the cochlear epithelium. In Homo sapiens (Human), this protein is Epithelial splicing regulatory protein 1 (ESRP1).